Consider the following 360-residue polypeptide: Probable butyrate kinase (360 aa).

This sequence belongs to the acetokinase family.

Its subcellular location is the cytoplasm. It carries out the reaction butanoate + ATP = butanoyl phosphate + ADP. This is Probable butyrate kinase from Enterococcus faecalis (strain ATCC 700802 / V583).